The following is a 470-amino-acid chain: Tigger transposable element-derived protein 3 (470 aa).

Residues 3-55 (LNTKKKLHALSLAEKIQVLELLDESKMSQSEVARRFQVSQPQISRICKNKEKL) form the HTH psq-type domain. 2 consecutive DNA-binding regions (H-T-H motif) follow at residues 31–51 (QSEVARRFQVSQPQISRICKN) and 100–130 (PMLLHKAKELADIMGQDFVPSIGWLVRWKRR). Residues 67–137 (ERKRKRESKY…KRRNNVGFGT (71 aa)) form the HTH CENPB-type domain. The DDE-1 domain occupies 167–360 (FSPEDVFGCA…VPRQLILSSF (194 aa)). A compositionally biased stretch (basic and acidic residues) spans 402-421 (DPGPRVCKEETGTEDSGREE). Positions 402 to 426 (DPGPRVCKEETGTEDSGREEDGFEP) are disordered.

Belongs to the tigger transposable element derived protein family.

It localises to the nucleus. The protein is Tigger transposable element-derived protein 3 (Tigd3) of Mus musculus (Mouse).